We begin with the raw amino-acid sequence, 356 residues long: Histidinol-phosphate aminotransferase (356 aa).

The residue at position 214 (K214) is an N6-(pyridoxal phosphate)lysine.

The protein belongs to the class-II pyridoxal-phosphate-dependent aminotransferase family. Histidinol-phosphate aminotransferase subfamily. Homodimer. It depends on pyridoxal 5'-phosphate as a cofactor.

The catalysed reaction is L-histidinol phosphate + 2-oxoglutarate = 3-(imidazol-4-yl)-2-oxopropyl phosphate + L-glutamate. Its pathway is amino-acid biosynthesis; L-histidine biosynthesis; L-histidine from 5-phospho-alpha-D-ribose 1-diphosphate: step 7/9. The protein is Histidinol-phosphate aminotransferase (hisC) of Escherichia coli O157:H7.